A 172-amino-acid chain; its full sequence is UPF0254 protein Mlab_1743 (172 aa).

Belongs to the UPF0254 family.

This chain is UPF0254 protein Mlab_1743, found in Methanocorpusculum labreanum (strain ATCC 43576 / DSM 4855 / Z).